Consider the following 274-residue polypeptide: Undecaprenyl-diphosphatase 1 (274 aa).

A run of 7 helical transmembrane segments spans residues 8–28, 45–65, 92–112, 120–140, 195–215, 230–250, and 253–273; these read WLLI…PIPV, IEGL…VIAI, FRIS…ALLF, LKQL…LWLI, FSFF…ISDI, IAFI…MNIM, and GKLI…LSLL.

Belongs to the UppP family.

The protein resides in the cell membrane. It carries out the reaction di-trans,octa-cis-undecaprenyl diphosphate + H2O = di-trans,octa-cis-undecaprenyl phosphate + phosphate + H(+). Its function is as follows. Catalyzes the dephosphorylation of undecaprenyl diphosphate (UPP). Confers resistance to bacitracin. In Halalkalibacterium halodurans (strain ATCC BAA-125 / DSM 18197 / FERM 7344 / JCM 9153 / C-125) (Bacillus halodurans), this protein is Undecaprenyl-diphosphatase 1.